The sequence spans 262 residues: Indole-3-glycerol phosphate synthase (262 aa).

It belongs to the TrpC family.

The enzyme catalyses 1-(2-carboxyphenylamino)-1-deoxy-D-ribulose 5-phosphate + H(+) = (1S,2R)-1-C-(indol-3-yl)glycerol 3-phosphate + CO2 + H2O. It participates in amino-acid biosynthesis; L-tryptophan biosynthesis; L-tryptophan from chorismate: step 4/5. The polypeptide is Indole-3-glycerol phosphate synthase (Leuconostoc mesenteroides subsp. mesenteroides (strain ATCC 8293 / DSM 20343 / BCRC 11652 / CCM 1803 / JCM 6124 / NCDO 523 / NBRC 100496 / NCIMB 8023 / NCTC 12954 / NRRL B-1118 / 37Y)).